Consider the following 114-residue polypeptide: Hydrogenase maturation factor HypA (114 aa).

Residue His2 participates in Ni(2+) binding. Residues Cys70, Cys73, Cys86, and Cys89 each contribute to the Zn(2+) site.

This sequence belongs to the HypA/HybF family.

Involved in the maturation of [NiFe] hydrogenases. Required for nickel insertion into the metal center of the hydrogenase. The sequence is that of Hydrogenase maturation factor HypA from Trichodesmium erythraeum (strain IMS101).